We begin with the raw amino-acid sequence, 94 residues long: Translation initiation factor IF-1 (94 aa).

Residues 1-72 (MAKEELIQFE…EKGRLIFRHK (72 aa)) form the S1-like domain. Residues 71 to 94 (HKDERPGGTGAPRSGPPRGQFRRR) are disordered.

This sequence belongs to the IF-1 family. In terms of assembly, component of the 30S ribosomal translation pre-initiation complex which assembles on the 30S ribosome in the order IF-2 and IF-3, IF-1 and N-formylmethionyl-tRNA(fMet); mRNA recruitment can occur at any time during PIC assembly.

It is found in the cytoplasm. In terms of biological role, one of the essential components for the initiation of protein synthesis. Stabilizes the binding of IF-2 and IF-3 on the 30S subunit to which N-formylmethionyl-tRNA(fMet) subsequently binds. Helps modulate mRNA selection, yielding the 30S pre-initiation complex (PIC). Upon addition of the 50S ribosomal subunit IF-1, IF-2 and IF-3 are released leaving the mature 70S translation initiation complex. This is Translation initiation factor IF-1 from Rhodopseudomonas palustris (strain HaA2).